Reading from the N-terminus, the 148-residue chain is UPF0178 protein lpp0103 (148 aa).

This sequence belongs to the UPF0178 family.

This chain is UPF0178 protein lpp0103, found in Legionella pneumophila (strain Paris).